A 380-amino-acid chain; its full sequence is Cytochrome b (380 aa).

4 helical membrane passes run 34-54 (FGSL…LLAM), 78-99 (WLIR…YLHI), 114-134 (WNTG…GYVL), and 179-199 (FFAL…IHLT). Residues His-84 and His-98 each contribute to the heme b site. Residues His-183 and His-197 each contribute to the heme b site. His-202 contributes to the a ubiquinone binding site. Transmembrane regions (helical) follow at residues 227-247 (LKDI…ALFS), 289-309 (LGGV…PLLH), 321-341 (LSQL…WIGS), and 348-368 (FIII…VLFP).

This sequence belongs to the cytochrome b family. As to quaternary structure, the cytochrome bc1 complex contains 11 subunits: 3 respiratory subunits (MT-CYB, CYC1 and UQCRFS1), 2 core proteins (UQCRC1 and UQCRC2) and 6 low-molecular weight proteins (UQCRH/QCR6, UQCRB/QCR7, UQCRQ/QCR8, UQCR10/QCR9, UQCR11/QCR10 and a cleavage product of UQCRFS1). This cytochrome bc1 complex then forms a dimer. It depends on heme b as a cofactor.

It is found in the mitochondrion inner membrane. Component of the ubiquinol-cytochrome c reductase complex (complex III or cytochrome b-c1 complex) that is part of the mitochondrial respiratory chain. The b-c1 complex mediates electron transfer from ubiquinol to cytochrome c. Contributes to the generation of a proton gradient across the mitochondrial membrane that is then used for ATP synthesis. The polypeptide is Cytochrome b (MT-CYB) (Oceanodroma melania (Black storm-petrel)).